Here is an 81-residue protein sequence, read N- to C-terminus: ATP synthase subunit c (81 aa).

2 helical membrane-spanning segments follow: residues Ala7–Gly27 and Leu57–Ala77.

It belongs to the ATPase C chain family. As to quaternary structure, F-type ATPases have 2 components, F(1) - the catalytic core - and F(0) - the membrane proton channel. F(1) has five subunits: alpha(3), beta(3), gamma(1), delta(1), epsilon(1). F(0) has four main subunits: a(1), b(1), b'(1) and c(10-14). The alpha and beta chains form an alternating ring which encloses part of the gamma chain. F(1) is attached to F(0) by a central stalk formed by the gamma and epsilon chains, while a peripheral stalk is formed by the delta, b and b' chains.

The protein localises to the cellular thylakoid membrane. Functionally, f(1)F(0) ATP synthase produces ATP from ADP in the presence of a proton or sodium gradient. F-type ATPases consist of two structural domains, F(1) containing the extramembraneous catalytic core and F(0) containing the membrane proton channel, linked together by a central stalk and a peripheral stalk. During catalysis, ATP synthesis in the catalytic domain of F(1) is coupled via a rotary mechanism of the central stalk subunits to proton translocation. Its function is as follows. Key component of the F(0) channel; it plays a direct role in translocation across the membrane. A homomeric c-ring of between 10-14 subunits forms the central stalk rotor element with the F(1) delta and epsilon subunits. The sequence is that of ATP synthase subunit c from Synechococcus sp. (strain CC9902).